A 424-amino-acid chain; its full sequence is MKPSLFKSLYFQVLAAIAIGVLLGHFNPELGAQMKPLGDGFVKLIKMIIAPVIFCTVVSGIAGMESMKAVGRTGAVALIYFEVVSTIALIIGLVVVNVLQPGAGMNVDPATLDAKAVAMYAQQAEQQGVVAFLLDVIPGSVIGAFASGNILQVLLFAILFGFALHRMGDKGTLVFNFIDSFSHVFFGIINMIMRLAPVGAFGAMAFTIGKYGVGSLVQLGQLIVCFYITCLLFVVVVLGLIARVVGFNIFKFIAYIKEELLIVLGTSSSESALPRMLAKMENLGCKKSVVGLVIPTGYSFNLDGTSIYLTMAAVFIAQATNSHMDIWHQITLLVVLLLSSKGAAGVTGSGFIVLAATLSAVGHLPVAGLALILGIDRFMSEARALTNLVGNGVATLVVAKWVGQLDEKKLKEQLVHRKNEVKSV.

A run of 8 helical transmembrane segments spans residues 4 to 24 (SLFK…VLLG), 44 to 64 (LIKM…IAGM), 76 to 96 (VALI…LVVV), 142 to 162 (IGAF…LFGF), 184 to 206 (VFFG…AMAF), 222 to 242 (LIVC…GLIA), 326 to 346 (IWHQ…AAGV), and 352 to 372 (IVLA…LALI).

This sequence belongs to the dicarboxylate/amino acid:cation symporter (DAACS) (TC 2.A.23) family.

Its subcellular location is the cell inner membrane. In terms of biological role, responsible for the transport of dicarboxylates such as succinate, fumarate, and malate from the periplasm across the membrane. This chain is C4-dicarboxylate transport protein, found in Erwinia tasmaniensis (strain DSM 17950 / CFBP 7177 / CIP 109463 / NCPPB 4357 / Et1/99).